The chain runs to 144 residues: Cytochrome c-type biogenesis protein CcmE (144 aa).

The Cytoplasmic portion of the chain corresponds to 1 to 7 (MTRKQKR). Residues 8–28 (LAVIGSGMGFLALAAALTFYA) traverse the membrane as a helical; Signal-anchor for type II membrane protein segment. Over 29 to 144 (LGQQTSYFYM…LKKDGLWQEQ (116 aa)) the chain is Periplasmic. Heme is bound by residues His-122 and Tyr-126.

It belongs to the CcmE/CycJ family.

It is found in the cell inner membrane. In terms of biological role, heme chaperone required for the biogenesis of c-type cytochromes. Transiently binds heme delivered by CcmC and transfers the heme to apo-cytochromes in a process facilitated by CcmF and CcmH. In Chelativorans sp. (strain BNC1), this protein is Cytochrome c-type biogenesis protein CcmE.